The chain runs to 146 residues: Transcriptional regulator MraZ (146 aa).

2 consecutive SpoVT-AbrB domains span residues 5–52 and 81–124; these read SAAL…PRAE and AAEI…KEES.

It belongs to the MraZ family. Forms oligomers.

It is found in the cytoplasm. Its subcellular location is the nucleoid. The sequence is that of Transcriptional regulator MraZ from Alcanivorax borkumensis (strain ATCC 700651 / DSM 11573 / NCIMB 13689 / SK2).